The following is a 1270-amino-acid chain: Activating transcription factor 7-interacting protein 1 (1270 aa).

N-acetylmethionine is present on M1. K33 is covalently cross-linked (Glycyl lysine isopeptide (Lys-Gly) (interchain with G-Cter in SUMO2)). Phosphoserine occurs at positions 57 and 113. Disordered stretches follow at residues 104–223 (DDDL…ISGD) and 235–402 (TSVD…EDET). Residue T118 is modified to Phosphothreonine. Low complexity-rich tracts occupy residues 132 to 203 (GDPA…SSGD) and 248 to 269 (DPAS…SDDL). 2 stretches are compositionally biased toward basic and acidic residues: residues 310 to 327 (SNKD…EKLE) and 333 to 343 (DSLDEKNKADN). Positions 347 to 356 (ANEETLETDD) are enriched in acidic residues. The span at 363–373 (RPPENEKKVEE) shows a compositional bias: basic and acidic residues. Phosphoserine occurs at positions 445, 473, 474, 477, 479, and 496. Disordered stretches follow at residues 455-570 (TSLL…SKRR), 658-685 (EDLK…NSNN), 822-862 (PPTV…PTAS), and 886-906 (RTSL…NRGP). Polar residues predominate over residues 474-486 (SFGSPSKQESSES). Residues 496 to 509 (SDEEDISGEKDESE) show a composition bias toward acidic residues. The span at 524 to 552 (SNEKDNKPEEEEQVIHEDDERPSEKNEFS) shows a compositional bias: basic and acidic residues. Residues 553 to 571 (RRKRSKSEDMDNVQSKRRR) carry the Nuclear localization signal motif. Residue K558 forms a Glycyl lysine isopeptide (Lys-Gly) (interchain with G-Cter in SUMO2) linkage. Residue S559 is modified to Phosphoserine. Residues 562-817 (MDNVQSKRRR…NQPSGNVEFI (256 aa)) form an interaction with SETDB1 region. A coiled-coil region spans residues 617–665 (KTLAELKTRVEKIECNKRHKTVLTELQAKIARLTKRFEAAKEDLKKRHE). Position 673 is a phosphoserine (S673). Over residues 822 to 834 (PPTVSGLTKNPVS) the composition is skewed to polar residues. Positions 843–854 (KPNNVPSVPSPS) are enriched in low complexity. Phosphoserine is present on S899. Glycyl lysine isopeptide (Lys-Gly) (interchain with G-Cter in SUMO2) cross-links involve residues K910 and K938. 2 stretches are compositionally biased toward polar residues: residues 918–942 (TSSA…TIDA) and 950–964 (DSTS…SDSS). Disordered stretches follow at residues 918–1026 (TSSA…SQTT) and 1115–1160 (STGP…STSL). The segment at 965-975 (GVIDLTMDDEE) is interaction with SUMO. Composition is skewed to polar residues over residues 988–999 (TPVSTMSSSQPV) and 1016–1026 (GVPTSGPSQTT). Positions 1134–1151 (PRPVHPAPLPEAPQPQRL) are enriched in pro residues. The segment at 1154-1270 (EAASTSLPQK…TDVISSTQSS (117 aa)) is interaction with MBD1. A Fibronectin type-III domain is found at 1160–1270 (LPQKPHLKLA…TDVISSTQSS (111 aa)).

This sequence belongs to the MCAF family. In terms of assembly, interacts with MBD1; the interaction is enhanced when MBD1 is sumoylated. Interacts with SETDB1; the interaction protects SETDB1 from proteasomal degradation and is required to stimulate histone methyltransferase activity and facilitate the conversion of dimethylated to trimethylated H3 'Lys-9'. Interacts with SUMO ubiquitin-like proteins (SUMO1, SUNO2 and SUMO3), with a preference for SUMO2 and SUMO3. Interacts with SP1, ATF7 and ZHX1. Interacts with the general transcription machinery, including ERCC2, ERCC3, GTF2E1, GTF2E2 and POLR2A. (Microbial infection) Interacts with Epstein-Barr virus BRLF1/Rta protein, leading to the regulation of host genes in Epstein-Barr virus-infected cells. In terms of tissue distribution, detected at low levels in breast, lung and stomach; highly up-regulated in the corresponding cancerous tissues (at protein level).

Its subcellular location is the nucleus. Its function is as follows. Recruiter that couples transcriptional factors to general transcription apparatus and thereby modulates transcription regulation and chromatin formation. Can both act as an activator or a repressor depending on the context. Required for HUSH-mediated heterochromatin formation and gene silencing. Mediates MBD1-dependent transcriptional repression, probably by recruiting complexes containing SETDB1. Stabilizes SETDB1, is required to stimulate histone methyltransferase activity of SETDB1 and facilitates the conversion of dimethylated to trimethylated H3 'Lys-9' (H3K9me3). The complex formed with MBD1 and SETDB1 represses transcription and couples DNA methylation and histone H3 'Lys-9' trimethylation (H3K9me3). Facilitates telomerase TERT and TERC gene expression by SP1 in cancer cells. This is Activating transcription factor 7-interacting protein 1 from Homo sapiens (Human).